A 428-amino-acid polypeptide reads, in one-letter code: Probable mitochondrial adenine nucleotide transporter BTL3 (428 aa).

3 Solcar repeats span residues 129–212 (LNTT…YRGQ), 222–307 (TTNF…LKSA), and 336–421 (LGPM…MKVV). The next 6 helical transmembrane spans lie at 132 to 152 (TKHL…IAPL), 187 to 207 (GNLV…YAYD), 228 to 248 (FVAG…LDTI), 283 to 303 (LVPS…VYDI), 342 to 362 (LLYG…FEVV), and 390 to 410 (VPAL…SAAI).

It belongs to the mitochondrial carrier (TC 2.A.29) family.

The protein resides in the mitochondrion inner membrane. Functionally, probable mitochondrial adenylate carrier that catalyzes the transport of ATP, ADP and AMP. This Arabidopsis thaliana (Mouse-ear cress) protein is Probable mitochondrial adenine nucleotide transporter BTL3.